We begin with the raw amino-acid sequence, 373 residues long: MVRNIVSRLCSQLFALPSSSLQERDPCSVTEYSGLATAVSSCKNIVLNGFQVPTGKQLDLSSLQNDSTVTFKGTTTFATTADNDFNPIVISGSNITITGASGHVIDGNGQAYWDGKGSNSNSNQKPDHFIVVQKTTGNSKITNLNIQNWPVHCFDITGSSQLTISGLILDNRAGDKPNAKSGSLPAAHNTDGFDISSSDHVTLDNNHVYNQDDCVAVTSGTNIVVSNMYCSGGHGLSIGSVGGKSDNVVDGVQFLSSQVVNSQNGCRIKSNSGATGTINNVTYQNIALTNISTYGVDVQQDYLNGGPTGKPTNGVKISNIKFIKVTGTVASSAQDWFILCGDGSCSGFTFSGNAITGGGKTSSCNYPTNTCPS.

The signal sequence occupies residues 1–24; the sequence is MVRNIVSRLCSQLFALPSSSLQER. C27 and C42 are joined by a disulfide. N-linked (GlcNAc...) asparagine glycosylation is found at N65 and N94. PbH1 repeat units lie at residues 136 to 158, 159 to 197, 198 to 219, 220 to 240, 249 to 270, 278 to 300, 312 to 333, and 345 to 369; these read TGNSKITNLNIQNWPVHCFDITG, SSQLTISGLILDNRAGDKPNAKSGSLPAAHNTDGFDISS, SDHVTLDNNHVYNQDDCVAVTS, GTNIVVSNMYCSGGHGLSIGS, VDGVQFLSSQVVNSQNGCRIKS, INNVTYQNIALTNISTYGVDVQQ, TNGVKISNIKFIKVTGTVASSA, and CSGFTFSGNAITGGGKTSSCNYPTN. Residue D212 is the Proton donor of the active site. A disulfide bridge connects residues C214 and C230. Residue H234 is part of the active site. 2 N-linked (GlcNAc...) asparagine glycosylation sites follow: N280 and N290. Disulfide bonds link C340-C345 and C364-C371.

The protein belongs to the glycosyl hydrolase 28 family.

Its subcellular location is the secreted. The enzyme catalyses (1,4-alpha-D-galacturonosyl)n+m + H2O = (1,4-alpha-D-galacturonosyl)n + (1,4-alpha-D-galacturonosyl)m.. Involved in maceration and soft-rotting of plant tissue. Hydrolyzes the 1,4-alpha glycosidic bonds of de-esterified pectate in the smooth region of the plant cell wall. In Fusarium fujikuroi (Bakanae and foot rot disease fungus), this protein is Polygalacturonase (PGA).